We begin with the raw amino-acid sequence, 466 residues long: MTSKIKSSNTLLTFDANEVTNIKLVWDIEELKNKDKEDKAHIKDEEEDEDGPVSFHPSFSHQIFNDEQVQGYEACKIDIYMGAGSLTSYIDTNYTLQSKNLTNVEGELLKVFSKQDPPISKQSFYKFIEEKEKSFKPIGKKIHEYTITDKESGEETEYEVYFGRITDQAVFRYHEKLQIFVLWYIDGSSYIWTDDPNWDIFFIFEKRIIDGEKRYGITGYSTIYNFYHHPEQTRARISQYLILPPYQRMGHGKYLFNSIHQYYKTNDGFYGPVYDVTIEDPADDFNLLRNYVDLKNIIDEKLFDNVILDLNANNKSVFEEIRKKLLVPHKQSKVCLEIYLFSKFLATPNSNPKYKEFRIAIKKRLYKQNIGDSEQIEKMKQQVAQENEDNLRLEQEELQELQDIENKKNGTNIKVAINTKELTTPSEPEKSKEEIEKDRLEEIIQLYKDLEENYHKTLSSLNLITK.

An N-acetyltransferase domain is found at 169-366 (AVFRYHEKLQ…FRIAIKKRLY (198 aa)). Acetyl-CoA is bound by residues 240–242 (YLI) and 247–253 (QRMGHGK). The active-site Proton donor/acceptor is E279. Positions 372-459 (DSEQIEKMKQ…LEENYHKTLS (88 aa)) form a coiled coil.

This sequence belongs to the HAT1 family.

The catalysed reaction is L-lysyl-[protein] + acetyl-CoA = N(6)-acetyl-L-lysyl-[protein] + CoA + H(+). The protein is Histone acetyltransferase type B catalytic subunit DDB_G0275159 of Dictyostelium discoideum (Social amoeba).